A 152-amino-acid polypeptide reads, in one-letter code: Transcriptional repressor NrdR (152 aa).

A zinc finger spans residues 3–34 (CPYCQHPDSDVIDTRKLHNGETIRRRRKCEAC). Positions 49–139 (ITVVKKNGER…VYRSFADIGK (91 aa)) constitute an ATP-cone domain.

Belongs to the NrdR family. Zn(2+) serves as cofactor.

Functionally, negatively regulates transcription of bacterial ribonucleotide reductase nrd genes and operons by binding to NrdR-boxes. In Roseiflexus sp. (strain RS-1), this protein is Transcriptional repressor NrdR.